A 66-amino-acid chain; its full sequence is Beta-toxin ChFII.7 (66 aa).

In terms of domain architecture, LCN-type CS-alpha/beta spans 1-66 (KEGYLVNHST…VWPLPKKTCN (66 aa)). 4 cysteine pairs are disulfide-bonded: Cys12-Cys65, Cys16-Cys41, Cys25-Cys46, and Cys29-Cys48. At Asn66 the chain carries Asparagine amide.

As to expression, expressed by the venom gland.

It localises to the secreted. Its function is as follows. Beta toxins bind voltage independently at site-4 of sodium channels (Nav) and shift the activation voltage toward more negative potentials, thereby affecting sodium channel activation CC and promoting spontaneous and repetitive firing. The sequence is that of Beta-toxin ChFII.7 from Centruroides hirsutipalpus (Scorpion).